Consider the following 282-residue polypeptide: Phosphate import ATP-binding protein PstB (282 aa).

Residues 1–33 form a disordered region; the sequence is MNMAETQLNPIARPTAPAGFDPAQSGQSQAPSR. Residues 36–277 enclose the ABC transporter domain; it reads IEINDLNFFY…PVRKETEDYI (242 aa). Residue 68-75 coordinates ATP; it reads GPSGCGKS.

The protein belongs to the ABC transporter superfamily. Phosphate importer (TC 3.A.1.7) family. As to quaternary structure, the complex is composed of two ATP-binding proteins (PstB), two transmembrane proteins (PstC and PstA) and a solute-binding protein (PstS).

Its subcellular location is the cell inner membrane. The enzyme catalyses phosphate(out) + ATP + H2O = ADP + 2 phosphate(in) + H(+). Its function is as follows. Part of the ABC transporter complex PstSACB involved in phosphate import. Responsible for energy coupling to the transport system. The polypeptide is Phosphate import ATP-binding protein PstB (Paraburkholderia xenovorans (strain LB400)).